The chain runs to 602 residues: Bifunctional lycopene cyclase/phytoene synthase (602 aa).

Residues 1 to 238 (MLTYMEVHLY…LVFASCATDR (238 aa)) are lycopene beta-cyclase. The next 7 helical transmembrane spans lie at 7-27 (VHLY…KPFF), 35-55 (YIFL…YIVY), 69-89 (VIGY…LITV), 110-130 (PVFQ…TIAA), 142-162 (PFYG…LWIG), 173-193 (AVLF…QYAI), and 211-231 (LPSL…VLVF). A phytoene synthase region spans residues 245-602 (IYITPMNHNK…RGKSQAFTVI (358 aa)).

This sequence in the N-terminal section; belongs to the lycopene beta-cyclase family. The protein in the C-terminal section; belongs to the phytoene/squalene synthase family.

It is found in the membrane. The enzyme catalyses all-trans-lycopene = gamma-carotene. The catalysed reaction is gamma-carotene = all-trans-beta-carotene. It catalyses the reaction 2 (2E,6E,10E)-geranylgeranyl diphosphate = 15-cis-phytoene + 2 diphosphate. Its pathway is carotenoid biosynthesis; beta-carotene biosynthesis. It functions in the pathway carotenoid biosynthesis; phytoene biosynthesis; all-trans-phytoene from geranylgeranyl diphosphate: step 1/1. Its function is as follows. Bifunctional enzyme that catalyzes the reactions from geranylgeranyl diphosphate to phytoene (phytoene synthase) and lycopene to beta-carotene via the intermediate gamma-carotene (lycopene cyclase). This chain is Bifunctional lycopene cyclase/phytoene synthase, found in Phycomyces blakesleeanus (strain ATCC 8743b / DSM 1359 / FGSC 10004 / NBRC 33097 / NRRL 1555).